The sequence spans 200 residues: MQKFIIHKGIACPLEYANIDTDQIIPKQFLLAVSKQGFGKHLFHDLRYVDDKESVLNMDFNLNKKEYQNSSILVSFENFGSGSSREHAPWALVDYGIRAIIAPSFADIFKNNALGNGLLTIELTKDEVLEIVDELKKSQDKNIEISLLEKRVFFKDKIFSFDLDDFHRICLLEGLDNIALTLKHEAQIKAYEKNSKSFLV.

The protein belongs to the LeuD family. LeuD type 1 subfamily. Heterodimer of LeuC and LeuD.

It carries out the reaction (2R,3S)-3-isopropylmalate = (2S)-2-isopropylmalate. It participates in amino-acid biosynthesis; L-leucine biosynthesis; L-leucine from 3-methyl-2-oxobutanoate: step 2/4. Its function is as follows. Catalyzes the isomerization between 2-isopropylmalate and 3-isopropylmalate, via the formation of 2-isopropylmaleate. The sequence is that of 3-isopropylmalate dehydratase small subunit from Campylobacter jejuni subsp. doylei (strain ATCC BAA-1458 / RM4099 / 269.97).